Here is a 178-residue protein sequence, read N- to C-terminus: Adenine phosphoribosyltransferase (178 aa).

Belongs to the purine/pyrimidine phosphoribosyltransferase family. As to quaternary structure, homodimer.

Its subcellular location is the cytoplasm. The catalysed reaction is AMP + diphosphate = 5-phospho-alpha-D-ribose 1-diphosphate + adenine. It participates in purine metabolism; AMP biosynthesis via salvage pathway; AMP from adenine: step 1/1. Catalyzes a salvage reaction resulting in the formation of AMP, that is energically less costly than de novo synthesis. The chain is Adenine phosphoribosyltransferase from Pseudoalteromonas atlantica (strain T6c / ATCC BAA-1087).